A 1306-amino-acid polypeptide reads, in one-letter code: Contactin-associated protein-like 5 (1306 aa).

The signal sequence occupies residues 1–24 (MDSLPRLTSVLTLLFSGLWHLGLT). Over 25 to 1237 (ATNYNCDDPL…PLTNAVRSDS (1213 aa)) the chain is Extracellular. Positions 30–174 (CDDPLASLLS…IGMRVEVYGC (145 aa)) constitute an F5/8 type C domain. A disulfide bond links C30 and C174. 2 Laminin G-like domains span residues 180–360 (VADF…TFSC) and 367–544 (PITF…IDLC). N-linked (GlcNAc...) asparagine glycans are attached at residues N282, N355, and N496. Cysteines 329 and 360 form a disulfide. Intrachain disulfides connect C512/C544, C550/C561, and C555/C570. Positions 546–583 (IKDRCLPNYCEHGGSCSQSWTTFYCNCSDTSYTGATCH) constitute an EGF-like 1 domain. N571 carries an N-linked (GlcNAc...) asparagine glycan. The cysteines at positions 572 and 582 are disulfide-linked. Positions 584–790 (NSIYEQSCEV…LRCYGDRRFW (207 aa)) constitute a Fibrinogen C-terminal domain. An N-linked (GlcNAc...) asparagine glycan is attached at N622. Residues 791–956 (NAVSFYTEAS…KVTSGVRPGC (166 aa)) enclose the Laminin G-like 3 domain. Cystine bridges form between C929–C956, C960–C973, C967–C982, C984–C994, and C1164–C1199. In terms of domain architecture, EGF-like 2 spans 957–995 (PGHCSSYGSICHNGGKCVEKHNGYLCDCTNSPYEGPFCK). The 187-residue stretch at 1013-1199 (QEPYPVTKNI…VHGTLTESSC (187 aa)) folds into the Laminin G-like 4 domain. A helical membrane pass occupies residues 1238–1258 (AVIGGVIAVVIFIIFCIIGIM). The Cytoplasmic portion of the chain corresponds to 1259 to 1306 (TRFLYQHKQSHRTSQMKEKEYPENLDSSFRNEIDLQNTVSECKREYFI).

This sequence belongs to the neurexin family.

It is found in the membrane. Its function is as follows. May play a role in the correct development and proper functioning of the peripheral and central nervous system and be involved in cell adhesion and intercellular communication. The polypeptide is Contactin-associated protein-like 5 (CNTNAP5) (Homo sapiens (Human)).